We begin with the raw amino-acid sequence, 323 residues long: Mortality factor 4-like protein 1 (323 aa).

Residues 12–62 enclose the Tudor-knot domain; the sequence is QEGERVLCFHGPLLYEAKCVKVAIKDKQVKYFIHYSGWNKNWDEWVPESRV. Residues 77–143 form a disordered region; the sequence is QKANQEQYAE…RKKRARVDPT (67 aa). The segment at 94 to 227 is sufficient for interaction with SIN3A; the sequence is PGKKTSGLQQ…VAGIKEYFNV (134 aa). N6-acetyllysine is present on Lys-104. The interaction with RB1-1 stretch occupies residues 125-191; it reads STSETPQPPR…FYLPAKKNVD (67 aa). Positions 149-303 are sufficient for interaction with PHF12; the sequence is TFMNRVEVKV…FLKYLAKNSA (155 aa). The 172-residue stretch at 152–323 folds into the MRG domain; that stretch reads NRVEVKVKIP…APPEYHRKAV (172 aa). Residues 284-305 form an interaction with RB1-2 region; that stretch reads LALLLNYLHDFLKYLAKNSATL.

Component of the NuA4 histone acetyltransferase complex which contains the catalytic subunit KAT5/TIP60 and the subunits EP400, TRRAP/PAF400, BRD8/SMAP, EPC1, DMAP1/DNMAP1, RUVBL1/TIP49, RUVBL2, ING3, actin, ACTL6A/BAF53A, MORF4L1/MRG15, MORF4L2/MRGX, MRGBP, YEATS4/GAS41, VPS72/YL1 and MEAF6. The NuA4 complex interacts with MYC and the adenovirus E1A protein. MORF4L1 may also participate in the formation of NuA4 related complexes which lack the KAT5/TIP60 catalytic subunit, but which include the SWI/SNF related protein SRCAP. Component of the mSin3A histone deacetylase complex, which includes SIN3A, HDAC2, ARID4B, MORF4L1, RBBP4/RbAp48, and RBBP7/RbAp46. May also interact with PHF12 and one or more as yet undefined members of the TLE (transducin-like enhancer of split) family of transcriptional repressors. Component of the SIN3B complex, which includes SIN3B, HDAC2 or HDAC1, PHF12 and MORF4L1. Interacts with RB1 and KAT8. Interacts with the N-terminus of MRFAP1. Found in a complex composed of MORF4L1, MRFAP1 and RB1. Interacts with the entire BRCA complex, which contains BRCA1, PALB2, BRCA2 and RAD51. Interacts with PALB2. Forms a complex with MSL1 and NUPR1.

The protein resides in the nucleus. In terms of biological role, component of the NuA4 histone acetyltransferase (HAT) complex which is involved in transcriptional activation of select genes principally by acetylation of nucleosomal histones H4 and H2A. This modification may both alter nucleosome - DNA interactions and promote interaction of the modified histones with other proteins which positively regulate transcription. This complex may be required for the activation of transcriptional programs associated with oncogene and proto-oncogene mediated growth induction, tumor suppressor mediated growth arrest and replicative senescence, apoptosis, and DNA repair. The NuA4 complex ATPase and helicase activities seem to be, at least in part, contributed by the association of RUVBL1 and RUVBL2 with EP400. NuA4 may also play a direct role in DNA repair when directly recruited to sites of DNA damage. As part of the SIN3B complex represses transcription and counteracts the histone acetyltransferase activity of EP300 through the recognition H3K27ac marks by PHF12 and the activity of the histone deacetylase HDAC2. SIN3B complex is recruited downstream of the constitutively active genes transcriptional start sites through interaction with histones and mitigates histone acetylation and RNA polymerase II progression within transcribed regions contributing to the regulation of transcription. Required for homologous recombination repair (HRR) and resistance to mitomycin C (MMC). Involved in the localization of PALB2, BRCA2 and RAD51, but not BRCA1, to DNA-damage foci. In Rattus norvegicus (Rat), this protein is Mortality factor 4-like protein 1 (Morf4l1).